The sequence spans 362 residues: Putative F-box protein At3g25750 (362 aa).

The 49-residue stretch at 4-52 (TEWSDLPEELLDLIANRYSSNIDVLRIRSTCKSWRSAVAMSKERLQFRF) folds into the F-box domain.

The protein is Putative F-box protein At3g25750 of Arabidopsis thaliana (Mouse-ear cress).